We begin with the raw amino-acid sequence, 516 residues long: Flavonoid 3',5'-hydroxylase (516 aa).

Cys453 lines the heme pocket.

Belongs to the cytochrome P450 family. The cofactor is heme.

The catalysed reaction is a 3',5'-unsubstituted flavanone + 2 reduced [NADPH--hemoprotein reductase] + 2 O2 = a 3',5'-dihydroxyflavanone + 2 oxidized [NADPH--hemoprotein reductase] + 2 H2O + 2 H(+). It functions in the pathway pigment biosynthesis; anthocyanin biosynthesis. Functionally, catalyzes the 3'5'-hydroxylation of naringenin and eriodictyol to form 5,7,3,'4',5'-pentahydroxyflavanone and 3',5'-hydroxylation of dihydrokaempferol and dihydroquercetin to form dihydromyricetin. The chain is Flavonoid 3',5'-hydroxylase (CYP75A4) from Gentiana triflora (Clustered gentian).